Reading from the N-terminus, the 875-residue chain is Alanine--tRNA ligase (875 aa).

Zn(2+) is bound by residues His562, His566, Cys665, and His669.

This sequence belongs to the class-II aminoacyl-tRNA synthetase family. The cofactor is Zn(2+).

The protein localises to the cytoplasm. The enzyme catalyses tRNA(Ala) + L-alanine + ATP = L-alanyl-tRNA(Ala) + AMP + diphosphate. Its function is as follows. Catalyzes the attachment of alanine to tRNA(Ala) in a two-step reaction: alanine is first activated by ATP to form Ala-AMP and then transferred to the acceptor end of tRNA(Ala). Also edits incorrectly charged Ser-tRNA(Ala) and Gly-tRNA(Ala) via its editing domain. This chain is Alanine--tRNA ligase, found in Saccharophagus degradans (strain 2-40 / ATCC 43961 / DSM 17024).